We begin with the raw amino-acid sequence, 80 residues long: Translation initiation factor IF-1, chloroplastic (80 aa).

One can recognise an S1-like domain in the interval 1-72 (MKKQNLIDME…TKGRIIYRLR (72 aa)).

This sequence belongs to the IF-1 family. Component of the 30S ribosomal translation pre-initiation complex which assembles on the 30S ribosome in the order IF-2 and IF-3, IF-1 and N-formylmethionyl-tRNA(fMet); mRNA recruitment can occur at any time during PIC assembly.

It localises to the plastid. The protein localises to the chloroplast. Functionally, one of the essential components for the initiation of protein synthesis. Stabilizes the binding of IF-2 and IF-3 on the 30S subunit to which N-formylmethionyl-tRNA(fMet) subsequently binds. Helps modulate mRNA selection, yielding the 30S pre-initiation complex (PIC). Upon addition of the 50S ribosomal subunit IF-1, IF-2 and IF-3 are released leaving the mature 70S translation initiation complex. In Adiantum capillus-veneris (Maidenhair fern), this protein is Translation initiation factor IF-1, chloroplastic.